Consider the following 343-residue polypeptide: Anthranilate phosphoribosyltransferase (343 aa).

5-phospho-alpha-D-ribose 1-diphosphate is bound by residues Gly84, 87–88, Thr92, 94–97, 112–120, and Ser124; these read GD, NIST, and KHGNRGVSS. An anthranilate-binding site is contributed by Gly84. Residue Ser96 coordinates Mg(2+). Residue Asn115 participates in anthranilate binding. Residue Arg170 participates in anthranilate binding. Asp229 and Glu230 together coordinate Mg(2+).

Belongs to the anthranilate phosphoribosyltransferase family. As to quaternary structure, homodimer. It depends on Mg(2+) as a cofactor.

It carries out the reaction N-(5-phospho-beta-D-ribosyl)anthranilate + diphosphate = 5-phospho-alpha-D-ribose 1-diphosphate + anthranilate. It participates in amino-acid biosynthesis; L-tryptophan biosynthesis; L-tryptophan from chorismate: step 2/5. Its function is as follows. Catalyzes the transfer of the phosphoribosyl group of 5-phosphorylribose-1-pyrophosphate (PRPP) to anthranilate to yield N-(5'-phosphoribosyl)-anthranilate (PRA). This is Anthranilate phosphoribosyltransferase from Burkholderia multivorans (strain ATCC 17616 / 249).